A 303-amino-acid polypeptide reads, in one-letter code: Glucosyl-3-phosphoglycerate synthase (303 aa).

Residues 35 to 39 (PALNE), serine 66, lysine 99, and 119 to 120 (DS) contribute to the UDP-alpha-D-glucose site. Aspartate 121 provides a ligand contact to Mn(2+). 166 to 169 (GRVT) contacts (2R)-3-phosphoglycerate. UDP-alpha-D-glucose contacts are provided by residues 211 to 214 (YGVE) and 238 to 243 (RAHRNR). Histidine 240 serves as a coordination point for Mn(2+). Asparagine 242 provides a ligand contact to (2R)-3-phosphoglycerate.

The protein belongs to the glycosyltransferase 2 family. As to quaternary structure, homotrimer. Mg(2+) is required as a cofactor. Requires Mn(2+) as cofactor.

The catalysed reaction is an NDP-alpha-D-glucose + (2R)-3-phosphoglycerate = (2R)-2-O-(alpha-D-glucopyranosyl)-3-phospho-glycerate + a ribonucleoside 5'-diphosphate + H(+). It carries out the reaction (2R)-3-phosphoglycerate + UDP-alpha-D-glucose = (2R)-2-O-(alpha-D-glucopyranosyl)-3-phospho-glycerate + UDP + H(+). The enzyme catalyses ADP-alpha-D-glucose + (2R)-3-phosphoglycerate = (2R)-2-O-(alpha-D-glucopyranosyl)-3-phospho-glycerate + ADP + H(+). It catalyses the reaction GDP-D-glucose + (2R)-3-phosphoglycerate = (2R)-2-O-(alpha-D-glucopyranosyl)-3-phospho-glycerate + GDP + H(+). Functionally, involved in the biosynthesis of 6-O-methylglucose lipopolysaccarides (MGLPs). Catalyzes the transfer of the glucose moiety from a nuleotide sugar such as UDP-alpha-D-glucose to the position 2 of 3-phospho-D-glycerate (3-PGA) to form glucosyl-3-phosphoglycerate (GPG). It can use UDP-glucose, ADP-glucose and GDP-glucose as sugar donor substrates with decreasing affinity and with 3-PGA as an acceptor. D-glycerate can only be an acceptor with ADP-glucose and at a very low rate. The protein is Glucosyl-3-phosphoglycerate synthase (gpgS) of Mycolicibacterium smegmatis (strain ATCC 700084 / mc(2)155) (Mycobacterium smegmatis).